The sequence spans 368 residues: DNA replication and repair protein RecF (368 aa).

An ATP-binding site is contributed by 30–37 (GKNGTGKT).

The protein belongs to the RecF family.

The protein resides in the cytoplasm. Its function is as follows. The RecF protein is involved in DNA metabolism; it is required for DNA replication and normal SOS inducibility. RecF binds preferentially to single-stranded, linear DNA. It also seems to bind ATP. In Chloroherpeton thalassium (strain ATCC 35110 / GB-78), this protein is DNA replication and repair protein RecF.